We begin with the raw amino-acid sequence, 144 residues long: Large ribosomal subunit protein uL13 (144 aa).

This sequence belongs to the universal ribosomal protein uL13 family. Part of the 50S ribosomal subunit.

Functionally, this protein is one of the early assembly proteins of the 50S ribosomal subunit, although it is not seen to bind rRNA by itself. It is important during the early stages of 50S assembly. In Oleidesulfovibrio alaskensis (strain ATCC BAA-1058 / DSM 17464 / G20) (Desulfovibrio alaskensis), this protein is Large ribosomal subunit protein uL13.